The sequence spans 308 residues: Methionyl-tRNA formyltransferase (308 aa).

A (6S)-5,6,7,8-tetrahydrofolate-binding site is contributed by 109-112 (SLLP).

Belongs to the Fmt family.

The catalysed reaction is L-methionyl-tRNA(fMet) + (6R)-10-formyltetrahydrofolate = N-formyl-L-methionyl-tRNA(fMet) + (6S)-5,6,7,8-tetrahydrofolate + H(+). In terms of biological role, attaches a formyl group to the free amino group of methionyl-tRNA(fMet). The formyl group appears to play a dual role in the initiator identity of N-formylmethionyl-tRNA by promoting its recognition by IF2 and preventing the misappropriation of this tRNA by the elongation apparatus. The chain is Methionyl-tRNA formyltransferase from Caulobacter vibrioides (strain NA1000 / CB15N) (Caulobacter crescentus).